A 386-amino-acid polypeptide reads, in one-letter code: Queuine tRNA-ribosyltransferase (386 aa).

The active-site Proton acceptor is the Asp-102. Substrate-binding positions include 102-106 (DSGGY), Asp-156, Gln-203, and Gly-230. The tract at residues 261–267 (GVGKPDD) is RNA binding. Catalysis depends on Asp-280, which acts as the Nucleophile. The segment at 285–289 (TRSGR) is RNA binding; important for wobble base 34 recognition. Zn(2+) contacts are provided by Cys-318, Cys-320, Cys-323, and His-349.

The protein belongs to the queuine tRNA-ribosyltransferase family. As to quaternary structure, homodimer. Within each dimer, one monomer is responsible for RNA recognition and catalysis, while the other monomer binds to the replacement base PreQ1. It depends on Zn(2+) as a cofactor.

It catalyses the reaction 7-aminomethyl-7-carbaguanine + guanosine(34) in tRNA = 7-aminomethyl-7-carbaguanosine(34) in tRNA + guanine. The protein operates within tRNA modification; tRNA-queuosine biosynthesis. In terms of biological role, catalyzes the base-exchange of a guanine (G) residue with the queuine precursor 7-aminomethyl-7-deazaguanine (PreQ1) at position 34 (anticodon wobble position) in tRNAs with GU(N) anticodons (tRNA-Asp, -Asn, -His and -Tyr). Catalysis occurs through a double-displacement mechanism. The nucleophile active site attacks the C1' of nucleotide 34 to detach the guanine base from the RNA, forming a covalent enzyme-RNA intermediate. The proton acceptor active site deprotonates the incoming PreQ1, allowing a nucleophilic attack on the C1' of the ribose to form the product. After dissociation, two additional enzymatic reactions on the tRNA convert PreQ1 to queuine (Q), resulting in the hypermodified nucleoside queuosine (7-(((4,5-cis-dihydroxy-2-cyclopenten-1-yl)amino)methyl)-7-deazaguanosine). The chain is Queuine tRNA-ribosyltransferase from Zymomonas mobilis subsp. mobilis (strain ATCC 31821 / ZM4 / CP4).